A 556-amino-acid polypeptide reads, in one-letter code: MFNPVTPQARPYAEHCCPRPLHGASAGTPGLQGLDFPVCHQPNLASSHHGYGLVPGTEHPGGAADGSRFSTPRGAGKLGKKRALSISPLSDSSVDLQTVIRTSPNSLVAFINSRCASAGGSYGHLSISTISPSLGYQNPPGQQKGQGQLFSHTPPLPPCSSHETLSSRPGLLHPTPARGTIKHCQQLKLERSLSSPLTAKYPEEKSEGDISSPASTGTQDPLLGMLSVRDDLEKEDGKPESETIYETNCYWDGCAKEFDTQEQLVHHINNEHIHGEKKEFVCHWAACSREQRPFKAQYMLVVHMRRHTGEKPHKCTFEGCNKAYSRLENLKTHLRSHTGEKPYVCEHEGCNKAFSNASDRAKHQNRTHSNEKPYICKIPGCTKRYTDPSSLRKHVKTVHGPDAHVTKKHRGSVVPGHALPASAAPQDMKQEKNTNGPAEIRKDDGKLLVPDLVSKPQPSPGGQSSCSSDRSPLGSTTNNDSGVEMTGNTGGSYEDLVHAGGCGARGSHGHLGADGLQKLENLRIDKLKQMRKPSTKGLNLPAIPEPVCRRCVRVCV.

3 disordered regions span residues 57-83 (TEHP…KKRA), 133-178 (SLGY…TPAR), and 200-222 (KYPE…QDPL). Over residues 135–148 (GYQNPPGQQKGQGQ) the composition is skewed to low complexity. C2H2-type zinc fingers lie at residues 247 to 272 (TNCY…NNEH), 280 to 307 (FVCH…MRRH), 313 to 337 (HKCT…LRSH), 343 to 368 (YVCE…NRTH), and 374 to 399 (YICK…KTVH). Residues 295–303 (KAQYMLVVH) are interaction with DNA. Interaction with DNA stretches follow at residues 357-362 (ASDRAK) and 387-393 (DPSSLRK). The segment at 387–492 (DPSSLRKHVK…VEMTGNTGGS (106 aa)) is disordered. The segment covering 454–472 (SKPQPSPGGQSSCSSDRSP) has biased composition (low complexity).

The protein belongs to the GLI C2H2-type zinc-finger protein family.

The protein localises to the cytoplasm. It is found in the nucleus. In terms of biological role, acts as a transcriptional activator. Binds to the DNA consensus sequence 5'-GACCACCCA-3'. May regulate the transcription of specific genes during normal development. May play a role in craniofacial development and digital development, as well as development of the central nervous system and gastrointestinal tract. Mediates SHH signaling. Plays a role in cell proliferation and differentiation via its role in SHH signaling. The protein is Zinc finger protein GLI1 (GLI1) of Gallus gallus (Chicken).